A 105-amino-acid chain; its full sequence is Oxytocin-neurophysin 1 (105 aa).

Cys1 and Cys6 form a disulfide bridge. Glycine amide is present on Gly9. 7 disulfide bridges follow: Cys22/Cys66, Cys25/Cys39, Cys33/Cys56, Cys40/Cys46, Cys73/Cys85, Cys79/Cys97, and Cys86/Cys91.

Belongs to the vasopressin/oxytocin family. Interacts with oxytocin receptor (Ki=1.5 nM). Interacts with vasopressin V1aR/AVPR1A (Ki=37 nM), V1bR/AVPR1B (Ki=222 nM), and V2R/AVPR2 receptors (Ki=823 nM).

Its subcellular location is the secreted. Its function is as follows. Neurophysin 1 specifically binds oxytocin. Functionally, oxytocin causes contraction of the smooth muscle of the uterus and of the mammary gland. Acts by binding to oxytocin receptor (OXTR). This is Oxytocin-neurophysin 1 (OXT) from Equus caballus (Horse).